The sequence spans 563 residues: Arginine--tRNA ligase (563 aa).

The short motif at 122–132 (PNIAKPMSMGH) is the 'HIGH' region element.

Belongs to the class-I aminoacyl-tRNA synthetase family. Monomer.

Its subcellular location is the cytoplasm. It catalyses the reaction tRNA(Arg) + L-arginine + ATP = L-arginyl-tRNA(Arg) + AMP + diphosphate. In Levilactobacillus brevis (strain ATCC 367 / BCRC 12310 / CIP 105137 / JCM 1170 / LMG 11437 / NCIMB 947 / NCTC 947) (Lactobacillus brevis), this protein is Arginine--tRNA ligase.